The primary structure comprises 623 residues: tRNA uridine 5-carboxymethylaminomethyl modification enzyme MnmG (623 aa).

10 to 15 contributes to the FAD binding site; sequence GGGHAG. Residue 269-283 coordinates NAD(+); it reads GPRYCPSIEDKIVRF.

The protein belongs to the MnmG family. As to quaternary structure, homodimer. Heterotetramer of two MnmE and two MnmG subunits. FAD serves as cofactor.

It is found in the cytoplasm. NAD-binding protein involved in the addition of a carboxymethylaminomethyl (cmnm) group at the wobble position (U34) of certain tRNAs, forming tRNA-cmnm(5)s(2)U34. The polypeptide is tRNA uridine 5-carboxymethylaminomethyl modification enzyme MnmG (Rhizobium meliloti (strain 1021) (Ensifer meliloti)).